We begin with the raw amino-acid sequence, 1466 residues long: ABC transporter C family member 6 (1466 aa).

10 helical membrane-spanning segments follow: residues serine 16 to phenylalanine 36, leucine 63 to cysteine 83, tryptophan 91 to phenylalanine 111, valine 128 to tyrosine 148, phenylalanine 158 to tryptophan 178, isoleucine 286 to leucine 306, asparagine 322 to cysteine 339, tryptophan 400 to tyrosine 420, leucine 425 to alanine 445, and serine 512 to leucine 532. Residues isoleucine 286–glutamine 567 enclose the ABC transmembrane type-1 1 domain. An ABC transporter 1 domain is found at valine 601–alanine 824. Glycine 636–serine 643 is a binding site for ATP. Positions alanine 840–glutamate 876 are disordered. Residues serine 844–serine 863 show a composition bias toward basic and acidic residues. The next 3 helical transmembrane spans lie at tyrosine 890–phenylalanine 910, glycine 937–isoleucine 957, and isoleucine 1026–proline 1046. Residues isoleucine 900 to asparagine 1182 enclose the ABC transmembrane type-1 2 domain. One can recognise an ABC transporter 2 domain in the interval isoleucine 1219 to alanine 1453. Position 1253 to 1260 (glycine 1253 to serine 1260) interacts with ATP.

It belongs to the ABC transporter superfamily. ABCC family. Conjugate transporter (TC 3.A.1.208) subfamily. As to expression, ubiquitous.

It is found in the membrane. It carries out the reaction ATP + H2O + xenobioticSide 1 = ADP + phosphate + xenobioticSide 2.. Pump for glutathione S-conjugates. This chain is ABC transporter C family member 6 (ABCC6), found in Arabidopsis thaliana (Mouse-ear cress).